The following is a 469-amino-acid chain: Trigger factor (469 aa).

Positions 162–243 constitute a PPIase FKBP-type domain; that stretch reads GDFVSIDLSA…VKSVKERELP (82 aa). A disordered region spans residues 429–469; sequence NTIDTSEFFGKHAQSDKADQKTEEADPNSDAIDEEVDEAAE. A compositionally biased stretch (basic and acidic residues) spans 437–452; that stretch reads FGKHAQSDKADQKTEE. Residues 453 to 469 are compositionally biased toward acidic residues; that stretch reads ADPNSDAIDEEVDEAAE.

The protein belongs to the FKBP-type PPIase family. Tig subfamily.

The protein localises to the cytoplasm. It carries out the reaction [protein]-peptidylproline (omega=180) = [protein]-peptidylproline (omega=0). Functionally, involved in protein export. Acts as a chaperone by maintaining the newly synthesized protein in an open conformation. Functions as a peptidyl-prolyl cis-trans isomerase. This is Trigger factor from Mycobacterium leprae (strain Br4923).